The following is a 919-amino-acid chain: 2-oxoadipate dehydrogenase complex component E1 (919 aa).

Lys183 and Lys188 each carry N6-succinyllysine. The segment at 299-320 is disordered; the sequence is GKTRGRQQSRQDGDYSPDNSAQ. Lys800 and Lys818 each carry N6-succinyllysine.

This sequence belongs to the alpha-ketoglutarate dehydrogenase family. As to quaternary structure, the 2-oxoadipate dehydrogenase complex is composed of OADH (2-oxoadipate dehydrogenase; E1a), DLST (dihydrolipoamide succinyltransferase; E2) and DLD (dihydrolipoamide dehydrogenase; E3). E1a functional unit is a dimer. Interacts with DLST. Thiamine diphosphate is required as a cofactor.

It localises to the mitochondrion. It carries out the reaction N(6)-[(R)-lipoyl]-L-lysyl-[protein] + 2-oxoadipate + H(+) = N(6)-[(R)-S(8)-glutaryldihydrolipoyl]-L-lysyl-[protein] + CO2. The protein operates within amino-acid degradation. Its function is as follows. 2-oxoadipate dehydrogenase (E1a) component of the 2-oxoadipate dehydrogenase complex (OADHC). Participates in the first step, rate limiting for the overall conversion of 2-oxoadipate (alpha-ketoadipate) to glutaryl-CoA and CO(2) catalyzed by the whole OADHC. Catalyzes the irreversible decarboxylation of 2-oxoadipate via the thiamine diphosphate (ThDP) cofactor and subsequent transfer of the decarboxylated acyl intermediate on an oxidized dihydrolipoyl group that is covalently amidated to the E2 enzyme (dihydrolipoyllysine-residue succinyltransferase or DLST). Can catalyze the decarboxylation of 2-oxoglutarate in vitro, but at a much lower rate than 2-oxoadipate. Responsible for the last step of L-lysine, L-hydroxylysine and L-tryptophan catabolism with the common product being 2-oxoadipate. The chain is 2-oxoadipate dehydrogenase complex component E1 (DHTKD1) from Homo sapiens (Human).